A 335-amino-acid chain; its full sequence is Tetraacyldisaccharide 4'-kinase (335 aa).

Position 58 to 65 (58 to 65 (TAGGSGKT)) interacts with ATP.

This sequence belongs to the LpxK family.

It catalyses the reaction a lipid A disaccharide + ATP = a lipid IVA + ADP + H(+). It participates in glycolipid biosynthesis; lipid IV(A) biosynthesis; lipid IV(A) from (3R)-3-hydroxytetradecanoyl-[acyl-carrier-protein] and UDP-N-acetyl-alpha-D-glucosamine: step 6/6. In terms of biological role, transfers the gamma-phosphate of ATP to the 4'-position of a tetraacyldisaccharide 1-phosphate intermediate (termed DS-1-P) to form tetraacyldisaccharide 1,4'-bis-phosphate (lipid IVA). This is Tetraacyldisaccharide 4'-kinase from Shewanella frigidimarina (strain NCIMB 400).